A 210-amino-acid chain; its full sequence is Cytochrome c biogenesis ATP-binding export protein CcmA (210 aa).

An ABC transporter domain is found at 4 to 208 (VPTLSFSKLG…GAIPAQLLEL (205 aa)). 39-46 (GANGVGKT) serves as a coordination point for ATP.

This sequence belongs to the ABC transporter superfamily. CcmA exporter (TC 3.A.1.107) family. In terms of assembly, the complex is composed of two ATP-binding proteins (CcmA) and two transmembrane proteins (CcmB).

It localises to the cell inner membrane. It catalyses the reaction heme b(in) + ATP + H2O = heme b(out) + ADP + phosphate + H(+). In terms of biological role, part of the ABC transporter complex CcmAB involved in the biogenesis of c-type cytochromes; once thought to export heme, this seems not to be the case, but its exact role is uncertain. Responsible for energy coupling to the transport system. In Albidiferax ferrireducens (strain ATCC BAA-621 / DSM 15236 / T118) (Rhodoferax ferrireducens), this protein is Cytochrome c biogenesis ATP-binding export protein CcmA.